We begin with the raw amino-acid sequence, 61 residues long: Progonadoliberin-1 (61 aa).

A Pyrrolidone carboxylic acid modification is found at glutamine 1. Glycine 10 is modified (glycine amide).

This sequence belongs to the GnRH family.

It is found in the secreted. In terms of biological role, stimulates the secretion of gonadotropins; it stimulates the secretion of both luteinizing and follicle-stimulating hormones. This is Progonadoliberin-1 (GNRH1) from Ovis aries (Sheep).